A 576-amino-acid polypeptide reads, in one-letter code: Arginine--tRNA ligase (576 aa).

The 'HIGH' region motif lies at 132–142; it reads ANPTGPMHIGH.

Belongs to the class-I aminoacyl-tRNA synthetase family. Monomer.

The protein resides in the cytoplasm. The catalysed reaction is tRNA(Arg) + L-arginine + ATP = L-arginyl-tRNA(Arg) + AMP + diphosphate. The polypeptide is Arginine--tRNA ligase (Ehrlichia ruminantium (strain Gardel)).